The chain runs to 60 residues: Metallothionein B (60 aa).

A beta region spans residues 1–28; that stretch reads MDPCECSKTGSCNCGGSCKCSNCACTSC. Residues cysteine 4, cysteine 6, cysteine 12, cysteine 14, cysteine 18, cysteine 20, cysteine 23, cysteine 25, cysteine 28, cysteine 32, cysteine 33, cysteine 35, cysteine 36, cysteine 40, cysteine 43, cysteine 47, cysteine 49, cysteine 54, cysteine 58, and cysteine 59 each contribute to the a divalent metal cation site. The interval 29-60 is alpha; sequence KKSCCPCCPSDCSKCASGCVCKGKTCDTSCCQ.

It belongs to the metallothionein superfamily. Type 1 family.

Metallothioneins have a high content of cysteine residues that bind various heavy metals. The chain is Metallothionein B (mtb) from Oncorhynchus mykiss (Rainbow trout).